The primary structure comprises 1364 residues: Outer kinetochore KNL1 complex subunit spc7 (1364 aa).

Positions 1 to 15 (MPTSPRRNSIATTDN) are enriched in polar residues. 3 disordered regions span residues 1 to 36 (MPTS…GALQ), 124 to 190 (YPKD…DIAS), and 202 to 223 (EALN…LSIQ). Residues 124–136 (YPKDHQSDSEKST) show a composition bias toward basic and acidic residues. Polar residues predominate over residues 157–169 (GPTTTSFSRNETQ). The segment covering 170-181 (SSPHSHSASIIS) has biased composition (low complexity). The short motif at 254-257 (MDLT) is the MELT; degenerate element. Phosphothreonine; by mph1 is present on Thr-257. The segment at 289–334 (ASHDPSNQTQLSSPNKSSSPTSIEISDFSKNNENHDQSENKEEEED) is disordered. The segment covering 300–310 (SSPNKSSSPTS) has biased composition (low complexity). Basic and acidic residues predominate over residues 318–328 (KNNENHDQSEN). Positions 450 to 453 (MDLT) match the MELT; degenerate motif. Phosphothreonine; by mph1 is present on Thr-453. The interval 456-503 (ISSTNAPTHLNEDDLNQFTSNISSSSKPRKDNNKTANSSKPIPDSEDF) is disordered. A compositionally biased stretch (polar residues) spans 471-481 (NQFTSNISSSS). The MELT; degenerate signature appears at 504–507 (MDIT). Residue Thr-507 is modified to Phosphothreonine; by mph1. 2 disordered regions span residues 564–643 (LPSA…SSFD) and 697–837 (GATP…GVSN). Over residues 566–585 (SADKENAEREEIPSYSDKSE) the composition is skewed to basic and acidic residues. Residues 586–617 (NFNTTSFTNHERSPNGNNNLKFSKDPNSSSPS) are compositionally biased toward polar residues. Over residues 719-730 (EVSRQPTDDKGE) the composition is skewed to basic and acidic residues. Positions 747–773 (LTIQQTNEIKHVPTNTTSSVKLPQQPS) are enriched in polar residues. Basic and acidic residues predominate over residues 791-802 (SLERLESQEPNR). Positions 808 to 820 (VGSSNAGNTTSVG) are enriched in polar residues. Positions 1075–1155 (LAQAQEKLEK…EEQLLNLKNE (81 aa)) form a coiled coil. The Nuclear localization signal motif lies at 1091 to 1105 (RRRRLLSEKEERRKE).

As to quaternary structure, component of the KNL1/SPC105 complex composed of at least spc7 and sos7. Part of the outer kinetochore KMN network that includes the KNL1, MIS12 and NDC80 complexes. Interacts (via C-terminus) with sos7 (via C-terminus); the interaction is direct. Interacts (when phosphorylated on MELT motifs) with bub1 and bub3; to recruit the BUB1-BUB3 complex to the kinetochore. In terms of processing, phosphorylation of threonine residues in the MELT motifs by mph1/mps1 leads to recruitment of bub1 and bub3 to the kinetochore, and is required to maintain spindle assembly checkpoint signaling.

It is found in the nucleus. It localises to the chromosome. Its subcellular location is the centromere. The protein resides in the kinetochore. Acts as a component of the outer kinetochore KNL1 complex that serves as a docking point for spindle assembly checkpoint components and mediates microtubule-kinetochore interactions. Kinetochores, consisting of a centromere-associated inner segment and a microtubule-contacting outer segment, play a crucial role in chromosome segregation by mediating the physical connection between centromeric DNA and spindle microtubules. The outer kinetochore is made up of the ten-subunit KMN network, comprising the MIS12, NDC80 and KNL1 complexes, and auxiliary microtubule-associated components; together they connect the outer kinetochore with the inner kinetochore, bind microtubules, and mediate interactions with mitotic checkpoint proteins that delay anaphase until chromosomes are bioriented on the spindle. Recruits the BUB1-BUB3 complex to kinetochores when phosphorylated by mph1/mps1, to support spindle assembly checkpoint signaling. Functions both in mitotic and in meiotic chromosome segregation. The polypeptide is Outer kinetochore KNL1 complex subunit spc7 (Schizosaccharomyces pombe (strain 972 / ATCC 24843) (Fission yeast)).